The sequence spans 372 residues: MDNHQLANVIPASEYGRILASGHPIMDVRAPIEFTKGAFPASSNHPLMRDDERQQVGTCYKEHGQDAAIALGHSLVCGAVKQQRVDAWLAYLDAHPDAYLYCFRGGLRSQLTQQWLAEAGRDVPYIQGGYKAMRQYLIDTIDRAPEARPMLILSGITGSGKTDFLLQRQEAVDLEGLAHHRGSSFGRYHEGQPTQINFENSLGVALLKHQQSPARILLLEDESYLIGRSALPKAFYMGMQAASVVILEEPLEARLTRLLDEYVHKMHRGYVERLGEEAGFEAFAEYLANSISGIKKRLGGKQHDELQQMITDALAVQTQRGDTQAHLEWIALLLSKYYDPMYQYQIGKKADRVIFQGDHQAMHQWLDEYATR.

One can recognise a Rhodanese domain in the interval L19–D142. C102 functions as the S-selanylcysteine intermediate in the catalytic mechanism.

This sequence belongs to the SelU family. In terms of assembly, monomer.

The catalysed reaction is 5-methylaminomethyl-2-thiouridine(34) in tRNA + selenophosphate + (2E)-geranyl diphosphate + H2O + H(+) = 5-methylaminomethyl-2-selenouridine(34) in tRNA + (2E)-thiogeraniol + phosphate + diphosphate. It catalyses the reaction 5-methylaminomethyl-2-thiouridine(34) in tRNA + (2E)-geranyl diphosphate = 5-methylaminomethyl-S-(2E)-geranyl-thiouridine(34) in tRNA + diphosphate. It carries out the reaction 5-methylaminomethyl-S-(2E)-geranyl-thiouridine(34) in tRNA + selenophosphate + H(+) = 5-methylaminomethyl-2-(Se-phospho)selenouridine(34) in tRNA + (2E)-thiogeraniol. The enzyme catalyses 5-methylaminomethyl-2-(Se-phospho)selenouridine(34) in tRNA + H2O = 5-methylaminomethyl-2-selenouridine(34) in tRNA + phosphate. Its function is as follows. Involved in the post-transcriptional modification of the uridine at the wobble position (U34) of tRNA(Lys), tRNA(Glu) and tRNA(Gln). Catalyzes the conversion of 2-thiouridine (S2U-RNA) to 2-selenouridine (Se2U-RNA). Acts in a two-step process involving geranylation of 2-thiouridine (S2U) to S-geranyl-2-thiouridine (geS2U) and subsequent selenation of the latter derivative to 2-selenouridine (Se2U) in the tRNA chain. This chain is tRNA 2-selenouridine synthase, found in Shewanella loihica (strain ATCC BAA-1088 / PV-4).